Reading from the N-terminus, the 2646-residue chain is Probable inactive serine/threonine-protein kinase roco10 (2646 aa).

7 disordered regions span residues 28–122 (LNYS…LSGG), 138–168 (NIPIPPVPTSPTSTPPNLQTNNNNKQDKDKD), 205–248 (PLFI…VSPS), 281–457 (QQQR…VKQA), 477–516 (MSKLVSQSKEQYKTPSSPYQQSTSSSISSGSGTISGHTSP), 605–656 (TSPN…PHQY), and 882–907 (QSSSSSSSSSISNSSSASSSSSSTPS). The segment covering 46–56 (PQQNLLENDTL) has biased composition (polar residues). Composition is skewed to low complexity over residues 78-115 (IITTTTTTTTTTAMSPVATTTTSSPTISASPTYITSPS), 147-161 (SPTSTPPNLQTNNNN), and 215-228 (SRNNNGKRNSGGNK). Positions 235–248 (KISSTSAAGDVSPS) are enriched in polar residues. Low complexity-rich tracts occupy residues 285 to 297 (NGNNNNNNNNNNN) and 325 to 334 (NNNNNNNNNN). Residues 335 to 345 (KQPQHPMNGNH) show a composition bias toward polar residues. Low complexity predominate over residues 346 to 394 (SPSNGTSGSLSMSGSGIDNGGNNNNNSNTHGSSSNQSSGVTSPIIQSTS). Polar residues-rich tracts occupy residues 402–416 (GLNSDSQMPLSSSPT) and 428–443 (TSASAVSSQNRSPLMN). 5 stretches are compositionally biased toward low complexity: residues 444–454 (STGVSSSSSGV), 491–516 (PSSPYQQSTSSSISSGSGTISGHTSP), 605–627 (TSPNLSSSLSSSSSSGSSGNSSP), 634–651 (QQQQQPQPTTTTTTNTNT), and 883–907 (SSSSSSSSSISNSSSASSSSSSTPS). The 223-residue stretch at 585–807 (SSISPISTAA…MFIQQADILF (223 aa)) folds into the Rho-GAP domain. LRR repeat units follow at residues 968 to 987 (QKLDMFSLELESLPNEIKQL), 989 to 1011 (DLQELNLNRNKFKLLPGDLARLT), 1012 to 1033 (SLRTICIEENNLTEISSEMADF), 1040 to 1061 (NLENVTLSSNRLVVLPPLYTWL), 1062 to 1083 (KLKTLNISNNYLTKLPIDIFQI), 1085 to 1108 (TLEVLRVSNNDLDDNGIPKICTST), 1109 to 1131 (KLRSLDLRKNHLTSIPEGIINLV), 1132 to 1154 (ELQVLTLADNQISHLTSDIQKLT), 1155 to 1176 (SLTELNLNGNQIQSLPPQLLLL), 1178 to 1199 (NLKKLYLDNNQLQSISSAIHRM), 1201 to 1222 (SLIELRLTNNNISRLPPGIVAL), 1224 to 1247 (KLNSLELTGNKPLKDNIPEKYIQK), 1248 to 1270 (GKEGIFSFFSETMRTNVPCYRTR), 1271 to 1298 (IIMLGDKSTGKSNLIKCLKKLPKSSFSS), and 1303 to 1327 (LPSLNNLNSNNSNNSGNSKTNILDI). Residues 1262 to 1474 (TNVPCYRTRI…RDIKQMIAKN (213 aa)) enclose the Roc domain. Disordered stretches follow at residues 1293 to 1317 (KSSFSSSSSNLPSLNNLNSNNSNNS), 1651 to 1670 (NNNNSNGNNVGRGRSGSRSM), and 1957 to 2026 (NNSS…KEKE). The segment covering 1651–1669 (NNNNSNGNNVGRGRSGSRS) has biased composition (low complexity). Residues 1966–1975 (PIASSRSNPK) show a composition bias toward polar residues. Residues 1983 to 1996 (NLIQSNNNDNNNSL) are compositionally biased toward low complexity. Residues 1997 to 2026 (SKKDLKELAKQNKEKEKEKEKDKDKEKEKE) show a composition bias toward basic and acidic residues. One can recognise a Protein kinase domain in the interval 2049 to 2342 (FSICHFIKEI…PSKIISQLYT (294 aa)). ATP contacts are provided by residues 2055–2063 (IKEIDYREI) and Lys2094. The 125-residue stretch at 2412 to 2536 (MVVLNNKQST…FTVPTTNKNG (125 aa)) folds into the RGS domain.

It belongs to the protein kinase superfamily. TKL Ser/Thr protein kinase family. ROCO subfamily.

In Dictyostelium discoideum (Social amoeba), this protein is Probable inactive serine/threonine-protein kinase roco10 (roco10).